We begin with the raw amino-acid sequence, 514 residues long: Maltose/maltodextrin transport system permease protein MalF (514 aa).

Over 1–16 (MDVIKKKHWWQSDALK) the chain is Cytoplasmic. Residues 17 to 36 (WSVLGLLGLLVGYLVVLMYA) form a helical membrane-spanning segment. Residues 37–39 (QGE) are Periplasmic-facing. The helical transmembrane segment at 40-58 (YLFAITTLILSSAGLYIFA) threads the bilayer. Over 59 to 66 (NRKAYAWR) the chain is Cytoplasmic. Residues 67–92 (YVYPGMAGMGLFVLFPLVCTIAIAFT) traverse the membrane as a helical segment. Residues 93 to 275 (NYSSTNQLTF…RVFTDEGIQK (183 aa)) are Periplasmic-facing. The chain crosses the membrane as a helical span at residues 276–306 (PFLAIFVWTVVFSLITVFLTVAVGMVLACLV). The 225-residue stretch at 281–505 (FVWTVVFSLI…LLVGALAIVN (225 aa)) folds into the ABC transmembrane type-1 domain. The Cytoplasmic segment spans residues 307–318 (QWEALRGKAVYR). Residues 319–336 (VLLILPYAVPSFISILIF) form a helical membrane-spanning segment. At 337–369 (KGLFNQSFGEINMMLSALFGVKPAWFSDPTTAR) the chain is on the periplasmic side. A helical membrane pass occupies residues 370–392 (TMLIIVNTWLGYPYMMILCMGLL). The Cytoplasmic segment spans residues 393–425 (KAIPDDLYEASAMDGAGPFQNFFKITLPLLIKP). The helical transmembrane segment at 426 to 452 (LTPLMIASFAFNFNNFVLIQLLTNGGP) threads the bilayer. Over 453–483 (DRLGTTTPAGYTDLLVNYTYRIAFEGGGGQD) the chain is Periplasmic. A helical membrane pass occupies residues 484 to 505 (FGLAAAIATLIFLLVGALAIVN). The Cytoplasmic segment spans residues 506-514 (LKATRMKFD).

This sequence belongs to the binding-protein-dependent transport system permease family. MalFG subfamily. In terms of assembly, the complex is composed of two ATP-binding proteins (MalK), two transmembrane proteins (MalG and MalF) and a solute-binding protein (MalE). Protein stability and stable complex formation require YidC.

Its subcellular location is the cell inner membrane. In terms of biological role, part of the ABC transporter complex MalEFGK involved in maltose/maltodextrin import. Probably responsible for the translocation of the substrate across the membrane. This Escherichia coli (strain K12) protein is Maltose/maltodextrin transport system permease protein MalF.